Consider the following 414-residue polypeptide: Multifunctional CCA protein (414 aa).

Residues Gly8 and Arg11 each contribute to the ATP site. 2 residues coordinate CTP: Gly8 and Arg11. Asp21 and Asp23 together coordinate Mg(2+). ATP is bound by residues Arg91, Arg137, and Arg140. CTP is bound by residues Arg91, Arg137, and Arg140. Residues 226 to 327 (TGVHVMMVVD…VTLFERCDAF (102 aa)) form the HD domain.

This sequence belongs to the tRNA nucleotidyltransferase/poly(A) polymerase family. Bacterial CCA-adding enzyme type 1 subfamily. Monomer. Can also form homodimers and oligomers. Mg(2+) is required as a cofactor. It depends on Ni(2+) as a cofactor.

It carries out the reaction a tRNA precursor + 2 CTP + ATP = a tRNA with a 3' CCA end + 3 diphosphate. It catalyses the reaction a tRNA with a 3' CCA end + 2 CTP + ATP = a tRNA with a 3' CCACCA end + 3 diphosphate. In terms of biological role, catalyzes the addition and repair of the essential 3'-terminal CCA sequence in tRNAs without using a nucleic acid template. Adds these three nucleotides in the order of C, C, and A to the tRNA nucleotide-73, using CTP and ATP as substrates and producing inorganic pyrophosphate. tRNA 3'-terminal CCA addition is required both for tRNA processing and repair. Also involved in tRNA surveillance by mediating tandem CCA addition to generate a CCACCA at the 3' terminus of unstable tRNAs. While stable tRNAs receive only 3'-terminal CCA, unstable tRNAs are marked with CCACCA and rapidly degraded. This is Multifunctional CCA protein from Herminiimonas arsenicoxydans.